The primary structure comprises 338 residues: Anthranilate phosphoribosyltransferase (338 aa).

5-phospho-alpha-D-ribose 1-diphosphate is bound by residues glycine 78, 81–82, threonine 86, 88–91, 106–114, and serine 118; these read GD, NIST, and KHGNRSVSS. Glycine 78 lines the anthranilate pocket. Serine 90 lines the Mg(2+) pocket. An anthranilate-binding site is contributed by asparagine 109. Residue arginine 164 participates in anthranilate binding. The Mg(2+) site is built by aspartate 223 and glutamate 224.

Belongs to the anthranilate phosphoribosyltransferase family. Homodimer. It depends on Mg(2+) as a cofactor.

It carries out the reaction N-(5-phospho-beta-D-ribosyl)anthranilate + diphosphate = 5-phospho-alpha-D-ribose 1-diphosphate + anthranilate. Its pathway is amino-acid biosynthesis; L-tryptophan biosynthesis; L-tryptophan from chorismate: step 2/5. In terms of biological role, catalyzes the transfer of the phosphoribosyl group of 5-phosphorylribose-1-pyrophosphate (PRPP) to anthranilate to yield N-(5'-phosphoribosyl)-anthranilate (PRA). The chain is Anthranilate phosphoribosyltransferase from Bacillus licheniformis (strain ATCC 14580 / DSM 13 / JCM 2505 / CCUG 7422 / NBRC 12200 / NCIMB 9375 / NCTC 10341 / NRRL NRS-1264 / Gibson 46).